A 300-amino-acid polypeptide reads, in one-letter code: GTPase Era (300 aa).

The Era-type G domain occupies 8–176 (RCGYVAIVGR…EKVIADHLPE (169 aa)). The segment at 16–23 (GRPNVGKS) is G1. Residue 16 to 23 (GRPNVGKS) participates in GTP binding. The segment at 42 to 46 (QTTRH) is G2. The G3 stretch occupies residues 63 to 66 (DTPG). GTP contacts are provided by residues 63-67 (DTPGM) and 125-128 (NKTD). Residues 125–128 (NKTD) are G4. Residues 155–157 (ISA) form a G5 region. The 85-residue stretch at 199 to 283 (VREKIMRQLG…MLNLWVKVKG (85 aa)) folds into the KH type-2 domain.

It belongs to the TRAFAC class TrmE-Era-EngA-EngB-Septin-like GTPase superfamily. Era GTPase family. As to quaternary structure, monomer.

Its subcellular location is the cytoplasm. The protein resides in the cell inner membrane. Functionally, an essential GTPase that binds both GDP and GTP, with rapid nucleotide exchange. Plays a role in 16S rRNA processing and 30S ribosomal subunit biogenesis and possibly also in cell cycle regulation and energy metabolism. The polypeptide is GTPase Era (Pseudomonas fluorescens (strain Pf0-1)).